We begin with the raw amino-acid sequence, 365 residues long: Aminomethyltransferase (365 aa).

This sequence belongs to the GcvT family. In terms of assembly, the glycine cleavage system is composed of four proteins: P, T, L and H.

It carries out the reaction N(6)-[(R)-S(8)-aminomethyldihydrolipoyl]-L-lysyl-[protein] + (6S)-5,6,7,8-tetrahydrofolate = N(6)-[(R)-dihydrolipoyl]-L-lysyl-[protein] + (6R)-5,10-methylene-5,6,7,8-tetrahydrofolate + NH4(+). Its function is as follows. The glycine cleavage system catalyzes the degradation of glycine. The sequence is that of Aminomethyltransferase from Yersinia pestis bv. Antiqua (strain Antiqua).